A 565-amino-acid polypeptide reads, in one-letter code: Proline--tRNA ligase (565 aa).

It belongs to the class-II aminoacyl-tRNA synthetase family. ProS type 1 subfamily. As to quaternary structure, homodimer.

It is found in the cytoplasm. It catalyses the reaction tRNA(Pro) + L-proline + ATP = L-prolyl-tRNA(Pro) + AMP + diphosphate. Functionally, catalyzes the attachment of proline to tRNA(Pro) in a two-step reaction: proline is first activated by ATP to form Pro-AMP and then transferred to the acceptor end of tRNA(Pro). As ProRS can inadvertently accommodate and process non-cognate amino acids such as alanine and cysteine, to avoid such errors it has two additional distinct editing activities against alanine. One activity is designated as 'pretransfer' editing and involves the tRNA(Pro)-independent hydrolysis of activated Ala-AMP. The other activity is designated 'posttransfer' editing and involves deacylation of mischarged Ala-tRNA(Pro). The misacylated Cys-tRNA(Pro) is not edited by ProRS. This is Proline--tRNA ligase from Francisella tularensis subsp. tularensis (strain FSC 198).